The chain runs to 120 residues: Ig heavy chain V region 36-65 (120 aa).

Positions 1 to 111 (VQLQQSGAEL…GGSYYFDYWG (111 aa)) constitute an Ig-like domain.

This Mus musculus (Mouse) protein is Ig heavy chain V region 36-65.